Reading from the N-terminus, the 604-residue chain is ATPase family AAA domain-containing protein 3A homolog (604 aa).

The tract at residues 1–50 (MSWLLGRNRQQPQPDQTAGFSEGGGAADPEGRTAGEKSGDSQLSRAERKA) is disordered. Residues 8–19 (NRQQPQPDQTAG) show a composition bias toward polar residues. A compositionally biased stretch (basic and acidic residues) spans 29–50 (PEGRTAGEKSGDSQLSRAERKA). Residues 62–221 (ERAADAAKTL…INLEKIRLKA (160 aa)) adopt a coiled-coil conformation. An ATP-binding site is contributed by 358 to 365 (GPPGTGKT).

Can form homooligomers.

The protein resides in the mitochondrion inner membrane. It is found in the mitochondrion matrix. It localises to the mitochondrion nucleoid. Required to maintain the proper number of mitochondria in neurons and muscles. The chain is ATPase family AAA domain-containing protein 3A homolog from Drosophila melanogaster (Fruit fly).